Reading from the N-terminus, the 238-residue chain is Ciliary microtubule associated protein 1B (238 aa).

The STPGR repeat unit spans residues 182–207 (PGPCAYHVVNPMIYKTRAPQFTMLGR). A disordered region spans residues 206–238 (GRTLPPRENTKKPGPASYSVDKVVWSRGSRGRG).

This sequence belongs to the CIMAP family.

The protein resides in the cell projection. The protein localises to the cilium. It localises to the flagellum. This Mus musculus (Mouse) protein is Ciliary microtubule associated protein 1B (Cimap1b).